We begin with the raw amino-acid sequence, 98 residues long: NADH-ubiquinone oxidoreductase chain 4L (98 aa).

3 consecutive transmembrane segments (helical) span residues 1–21, 29–49, and 61–81; these read MTMVYANIFLAFTTSLMGLLM, SLLCLEGMMLSLFVMMTVTIL, and IILLVFAACEAALGLSLLVMV.

Belongs to the complex I subunit 4L family. As to quaternary structure, core subunit of respiratory chain NADH dehydrogenase (Complex I) which is composed of 45 different subunits.

The protein localises to the mitochondrion inner membrane. The enzyme catalyses a ubiquinone + NADH + 5 H(+)(in) = a ubiquinol + NAD(+) + 4 H(+)(out). In terms of biological role, core subunit of the mitochondrial membrane respiratory chain NADH dehydrogenase (Complex I) which catalyzes electron transfer from NADH through the respiratory chain, using ubiquinone as an electron acceptor. Part of the enzyme membrane arm which is embedded in the lipid bilayer and involved in proton translocation. The protein is NADH-ubiquinone oxidoreductase chain 4L (MT-ND4L) of Neomonachus schauinslandi (Hawaiian monk seal).